A 468-amino-acid chain; its full sequence is Glutamate--tRNA ligase (468 aa).

Residues Pro-12 to Thr-22 carry the 'HIGH' region motif. The 'KMSKS' region motif lies at Lys-238–Arg-242. Lys-241 serves as a coordination point for ATP.

It belongs to the class-I aminoacyl-tRNA synthetase family. Glutamate--tRNA ligase type 1 subfamily. In terms of assembly, monomer.

Its subcellular location is the cytoplasm. It catalyses the reaction tRNA(Glu) + L-glutamate + ATP = L-glutamyl-tRNA(Glu) + AMP + diphosphate. Its function is as follows. Catalyzes the attachment of glutamate to tRNA(Glu) in a two-step reaction: glutamate is first activated by ATP to form Glu-AMP and then transferred to the acceptor end of tRNA(Glu). In Phenylobacterium zucineum (strain HLK1), this protein is Glutamate--tRNA ligase.